The sequence spans 342 residues: Cell cycle control protein 50C (342 aa).

Over 1 to 33 the chain is Cytoplasmic; it reads MEMMPQYDLSRLPENTALKQQTLPTQQLNLSAS. Residues 34-54 form a helical membrane-spanning segment; that stretch reads VVLSIFFITGGFCLSIGIILL. Over 55-306 the chain is Extracellular; that stretch reads LSAKSTKKIE…STLTWIGGGG (252 aa). 4 N-linked (GlcNAc...) asparagine glycosylation sites follow: asparagine 66, asparagine 80, asparagine 89, and asparagine 205. The chain crosses the membrane as a helical span at residues 307–327; it reads LFLGLTYTVTGALTLLASFAI. Over 328–342 the chain is Cytoplasmic; it reads LTIHLMLKRSKLNFL.

This sequence belongs to the CDC50/LEM3 family. As to expression, specifically expressed in testis.

The protein localises to the membrane. This Mus musculus (Mouse) protein is Cell cycle control protein 50C (Tmem30c).